Consider the following 71-residue polypeptide: Small ribosomal subunit protein bS21 (71 aa).

This sequence belongs to the bacterial ribosomal protein bS21 family.

This chain is Small ribosomal subunit protein bS21, found in Vesicomyosocius okutanii subsp. Calyptogena okutanii (strain HA).